The sequence spans 136 residues: Protein NrdI (136 aa).

This sequence belongs to the NrdI family.

In terms of biological role, probably involved in ribonucleotide reductase function. This is Protein NrdI from Citrobacter koseri (strain ATCC BAA-895 / CDC 4225-83 / SGSC4696).